We begin with the raw amino-acid sequence, 572 residues long: Methionine--tRNA ligase (572 aa).

A 'HIGH' region motif is present at residues 11–21 (PYINGIKHLGN). The Zn(2+) site is built by cysteine 143, cysteine 146, cysteine 156, and cysteine 159. Residues 346 to 350 (QFSTS) carry the 'KMSKS' region motif. Residue threonine 349 coordinates ATP.

Belongs to the class-I aminoacyl-tRNA synthetase family. MetG type 1 subfamily. Monomer. It depends on Zn(2+) as a cofactor.

The protein localises to the cytoplasm. The enzyme catalyses tRNA(Met) + L-methionine + ATP = L-methionyl-tRNA(Met) + AMP + diphosphate. Its function is as follows. Is required not only for elongation of protein synthesis but also for the initiation of all mRNA translation through initiator tRNA(fMet) aminoacylation. The polypeptide is Methionine--tRNA ligase (Ruegeria pomeroyi (strain ATCC 700808 / DSM 15171 / DSS-3) (Silicibacter pomeroyi)).